The primary structure comprises 303 residues: 2-phospho-L-lactate transferase (303 aa).

The 7,8-didemethyl-8-hydroxy-5-deazariboflavin site is built by Asp48 and Lys87.

This sequence belongs to the CofD family. Homodimer. Mg(2+) serves as cofactor.

It carries out the reaction (2S)-lactyl-2-diphospho-5'-guanosine + 7,8-didemethyl-8-hydroxy-5-deazariboflavin = oxidized coenzyme F420-0 + GMP + H(+). The protein operates within cofactor biosynthesis; coenzyme F420 biosynthesis. In terms of biological role, catalyzes the transfer of the 2-phospholactate moiety from (2S)-lactyl-2-diphospho-5'-guanosine to 7,8-didemethyl-8-hydroxy-5-deazariboflavin (FO) with the formation of oxidized coenzyme F420-0 and GMP. The polypeptide is 2-phospho-L-lactate transferase (Methanosarcina mazei (strain ATCC BAA-159 / DSM 3647 / Goe1 / Go1 / JCM 11833 / OCM 88) (Methanosarcina frisia)).